Reading from the N-terminus, the 573-residue chain is Mitochondrial distribution and morphology protein 34 (573 aa).

Residues 1 to 195 (MAFNFNWSPL…LPAIIHRLSL (195 aa)) enclose the SMP-LTD domain. Disordered stretches follow at residues 301–326 (EGLGSGLMSPGSPALSRTHSHISSPL), 349–433 (FSGY…RFPN), 499–521 (SREKSMEAQSSHGPNPGLSITDA), and 550–573 (LVNNNYPGPWEQTRARTPPPAYGQ). Positions 306–316 (GLMSPGSPALS) are enriched in low complexity. The segment covering 360–373 (RHTKARPTKKRKKR) has biased composition (basic residues). Basic and acidic residues predominate over residues 374–385 (VVDLRKQSKPTD). Residues 396 to 409 (TETSTASTTFSSST) show a composition bias toward low complexity.

Belongs to the MDM34 family. In terms of assembly, component of the ER-mitochondria encounter structure (ERMES) or MDM complex, composed of MMM1, MDM10, MDM12 and MDM34.

It is found in the mitochondrion outer membrane. Component of the ERMES/MDM complex, which serves as a molecular tether to connect the endoplasmic reticulum (ER) and mitochondria. Components of this complex are involved in the control of mitochondrial shape and protein biogenesis, and function in nonvesicular lipid trafficking between the ER and mitochondria. MDM34 is required for the interaction of the ER-resident membrane protein MMM1 and the outer mitochondrial membrane-resident beta-barrel protein MDM10. This is Mitochondrial distribution and morphology protein 34 from Uncinocarpus reesii (strain UAMH 1704).